The sequence spans 1307 residues: Cellulose synthase 2 operon protein C (1307 aa).

Residues Met-1–Ala-55 form the signal peptide. TPR repeat units lie at residues Leu-97–Asn-130, Leu-270–Thr-303, Ala-339–Asp-372, Asp-374–Ala-406, Leu-458–Asp-491, Gly-493–Met-525, Arg-528–Asp-561, Ile-754–Ser-787, and Val-788–Asn-821.

The protein belongs to the AcsC/BcsC family.

It is found in the cell outer membrane. It participates in glycan metabolism; bacterial cellulose biosynthesis. Functionally, required for maximal bacterial cellulose synthesis. The polypeptide is Cellulose synthase 2 operon protein C (bcsCII) (Komagataeibacter xylinus (Gluconacetobacter xylinus)).